We begin with the raw amino-acid sequence, 353 residues long: tRNA U34 carboxymethyltransferase (353 aa).

Carboxy-S-adenosyl-L-methionine contacts are provided by residues Lys101, Trp119, Lys124, Gly144, 166–168 (DPS), 207–208 (LE), Met227, Tyr231, and Arg346.

Belongs to the class I-like SAM-binding methyltransferase superfamily. CmoB family. In terms of assembly, homotetramer.

It carries out the reaction carboxy-S-adenosyl-L-methionine + 5-hydroxyuridine(34) in tRNA = 5-carboxymethoxyuridine(34) in tRNA + S-adenosyl-L-homocysteine + H(+). In terms of biological role, catalyzes carboxymethyl transfer from carboxy-S-adenosyl-L-methionine (Cx-SAM) to 5-hydroxyuridine (ho5U) to form 5-carboxymethoxyuridine (cmo5U) at position 34 in tRNAs. In Psychrobacter sp. (strain PRwf-1), this protein is tRNA U34 carboxymethyltransferase.